Reading from the N-terminus, the 89-residue chain is Large ribosomal subunit protein bL27 (89 aa).

The disordered stretch occupies residues 1-24; that stretch reads MAHKKGTGSTRNGRDSNAKRLGVK.

Belongs to the bacterial ribosomal protein bL27 family.

The polypeptide is Large ribosomal subunit protein bL27 (Synechococcus sp. (strain JA-2-3B'a(2-13)) (Cyanobacteria bacterium Yellowstone B-Prime)).